Consider the following 919-residue polypeptide: Kinesin-like protein KIN-6 (919 aa).

Positions 1-59 (MVRLSTKPPNPKVEMNLKEPPITGAGAGAAASPPAPSTLRRNPPRSARPPPTPLPNSKP) are disordered. Residues 28–45 (GAAASPPAPSTLRRNPPR) show a composition bias toward low complexity. Residues 46-56 (SARPPPTPLPN) are compositionally biased toward pro residues. Residues 72–415 (RLKVFLRIRP…LRQASPYMKI (344 aa)) enclose the Kinesin motor domain. An ATP-binding site is contributed by 171 to 178 (GPTGSGKT). 5 disordered regions span residues 591 to 615 (EEVS…TGTG), 674 to 700 (SESC…SFTD), 711 to 730 (SPQF…EEER), 737 to 764 (TTEG…EVNS), and 886 to 919 (KEEK…GRAQ). Residues 597-612 (STGHGPERSSDYDDKT) show a composition bias toward basic and acidic residues. Residues 685–697 (HSSSSLDHPSDQS) are compositionally biased toward low complexity. Positions 755–764 (TPSCSQEVNS) are enriched in polar residues. The segment covering 886-912 (KEEKVKSSRDAMGRSDKLIRLLTDHPP) has biased composition (basic and acidic residues).

It belongs to the TRAFAC class myosin-kinesin ATPase superfamily. Kinesin family. KIN-6 subfamily.

The polypeptide is Kinesin-like protein KIN-6 (Oryza sativa subsp. japonica (Rice)).